Reading from the N-terminus, the 380-residue chain is MAGVVESVPFEGSPRPTIGIEWEVALVDKVTRDLSNTAAAVFDAVGDLRAWDGTPQVTKELLRNTVEIVTGVHETVGAAVEDLRGTMDKVRRAADPLGVDVFCAGTHPFAQWSTQQLTRSPHYDELIERTQWWGRQMMIWGVHVHVGVSHREKVFPILNSLLTTFPHLLALSASSPMWAGSDTGYASNRTLMFQQLPTAGLPFQFENWRQFEHFVHDELKTGVFEQLGGLHWDIRPAPKWGTIEVRICDGIPTHAELAAIAAFIHCLIVDLDQRIEDGEQPITLPPWHVQENKWRAARYGLDAIVITDADSNERLVTDDLMDLLNRLEPTAKRLGCADELAYVATIPERGASYQRQRKVAAASQGDLVAVVDALVHELDR.

It belongs to the glutamate--cysteine ligase type 2 family. YbdK subfamily.

The catalysed reaction is L-cysteine + L-glutamate + ATP = gamma-L-glutamyl-L-cysteine + ADP + phosphate + H(+). In terms of biological role, ATP-dependent carboxylate-amine ligase which exhibits weak glutamate--cysteine ligase activity. The polypeptide is Putative glutamate--cysteine ligase 2-2 (Nocardia farcinica (strain IFM 10152)).